The sequence spans 101 residues: CRISPR-associated endoribonuclease Cas2 (101 aa).

D8 contacts Mg(2+).

The protein belongs to the CRISPR-associated endoribonuclease Cas2 protein family. Homodimer, forms a heterotetramer with a Cas1 homodimer. Requires Mg(2+) as cofactor.

In terms of biological role, CRISPR (clustered regularly interspaced short palindromic repeat), is an adaptive immune system that provides protection against mobile genetic elements (viruses, transposable elements and conjugative plasmids). CRISPR clusters contain sequences complementary to antecedent mobile elements and target invading nucleic acids. CRISPR clusters are transcribed and processed into CRISPR RNA (crRNA). Functions as a ssRNA-specific endoribonuclease. Involved in the integration of spacer DNA into the CRISPR cassette. This chain is CRISPR-associated endoribonuclease Cas2, found in Lacticaseibacillus rhamnosus (strain ATCC 53103 / LMG 18243 / GG) (Lactobacillus rhamnosus).